Consider the following 212-residue polypeptide: Methylthioribulose-1-phosphate dehydratase (212 aa).

Zn(2+)-binding residues include His-97 and His-99.

This sequence belongs to the aldolase class II family. MtnB subfamily. As to quaternary structure, homotetramer. Zn(2+) serves as cofactor.

The catalysed reaction is 5-(methylsulfanyl)-D-ribulose 1-phosphate = 5-methylsulfanyl-2,3-dioxopentyl phosphate + H2O. The protein operates within amino-acid biosynthesis; L-methionine biosynthesis via salvage pathway; L-methionine from S-methyl-5-thio-alpha-D-ribose 1-phosphate: step 2/6. Its function is as follows. Catalyzes the dehydration of methylthioribulose-1-phosphate (MTRu-1-P) into 2,3-diketo-5-methylthiopentyl-1-phosphate (DK-MTP-1-P). This chain is Methylthioribulose-1-phosphate dehydratase, found in Bacillus cereus (strain G9842).